The primary structure comprises 193 residues: Probable GTP-binding protein EngB (193 aa).

The region spanning 19-188 is the EngB-type G domain; that stretch reads SVKEVCFMGR…HKQIFELFKA (170 aa). GTP contacts are provided by residues 27–34, 53–57, 70–73, 136–139, and 167–169; these read GRSNVGKS, GRTQL, DLPG, NKFD, and VSA. 2 residues coordinate Mg(2+): S34 and T55.

Belongs to the TRAFAC class TrmE-Era-EngA-EngB-Septin-like GTPase superfamily. EngB GTPase family. Mg(2+) is required as a cofactor.

In terms of biological role, necessary for normal cell division and for the maintenance of normal septation. This is Probable GTP-binding protein EngB from Mycoplasma pneumoniae (strain ATCC 29342 / M129 / Subtype 1) (Mycoplasmoides pneumoniae).